The primary structure comprises 458 residues: Chromosomal replication initiator protein DnaA (458 aa).

The interval 1 to 84 (MENIWLEAQT…FHVAEEKPEA (84 aa)) is domain I, interacts with DnaA modulators. A compositionally biased stretch (basic and acidic residues) spans 80-119 (EKPEAAHEAKPEKEAKPAREKERDKDKEKEKDREKEKKEL). Positions 80–120 (EKPEAAHEAKPEKEAKPAREKERDKDKEKEKDREKEKKELV) are disordered. The interval 84 to 121 (AAHEAKPEKEAKPAREKERDKDKEKEKDREKEKKELVP) is domain II. The segment at 122–338 (NLNPKYTFES…GMLIRLEAFA (217 aa)) is domain III, AAA+ region. 4 residues coordinate ATP: glycine 166, glycine 168, lysine 169, and threonine 170. The interval 339–458 (SLTGQEITLS…VEDIRKKLFT (120 aa)) is domain IV, binds dsDNA.

This sequence belongs to the DnaA family. As to quaternary structure, oligomerizes as a right-handed, spiral filament on DNA at oriC.

Its subcellular location is the cytoplasm. Its function is as follows. Plays an essential role in the initiation and regulation of chromosomal replication. ATP-DnaA binds to the origin of replication (oriC) to initiate formation of the DNA replication initiation complex once per cell cycle. Binds the DnaA box (a 9 base pair repeat at the origin) and separates the double-stranded (ds)DNA. Forms a right-handed helical filament on oriC DNA; dsDNA binds to the exterior of the filament while single-stranded (ss)DNA is stabiized in the filament's interior. The ATP-DnaA-oriC complex binds and stabilizes one strand of the AT-rich DNA unwinding element (DUE), permitting loading of DNA polymerase. After initiation quickly degrades to an ADP-DnaA complex that is not apt for DNA replication. Binds acidic phospholipids. In Citrifermentans bemidjiense (strain ATCC BAA-1014 / DSM 16622 / JCM 12645 / Bem) (Geobacter bemidjiensis), this protein is Chromosomal replication initiator protein DnaA.